Here is a 140-residue protein sequence, read N- to C-terminus: Putative pre-16S rRNA nuclease (140 aa).

The protein belongs to the YqgF nuclease family.

The protein resides in the cytoplasm. Its function is as follows. Could be a nuclease involved in processing of the 5'-end of pre-16S rRNA. The polypeptide is Putative pre-16S rRNA nuclease (Lachnospira eligens (strain ATCC 27750 / DSM 3376 / VPI C15-48 / C15-B4) (Eubacterium eligens)).